Consider the following 937-residue polypeptide: Lysosomal alpha-glucosidase (937 aa).

A signal peptide spans methionine 1 to leucine 23. Residues glycine 24–arginine 60 constitute a propeptide that is removed on maturation. The P-type domain occupies threonine 68–proline 118. 3 cysteine pairs are disulfide-bonded: cysteine 70–cysteine 97, cysteine 80–cysteine 96, and cysteine 91–cysteine 114. N-linked (GlcNAc...) asparagine glycosylation is found at asparagine 127, asparagine 220, asparagine 259, and asparagine 377. Aspartate 391 provides a ligand contact to substrate. The N-linked (GlcNAc...) asparagine glycan is linked to asparagine 457. Aspartate 505 acts as the Nucleophile in catalysis. Residue glutamate 508 is part of the active site. A disulfide bond links cysteine 520 and cysteine 545. Substrate contacts are provided by arginine 587 and aspartate 603. Cysteine 634 and cysteine 645 form a disulfide bridge. Asparagine 639 carries N-linked (GlcNAc...) asparagine glycosylation. Position 661 (histidine 661) interacts with substrate. N-linked (GlcNAc...) asparagine glycans are attached at residues asparagine 867, asparagine 888, and asparagine 910.

Belongs to the glycosyl hydrolase 31 family.

The protein resides in the lysosome. Its subcellular location is the lysosome membrane. It catalyses the reaction Hydrolysis of terminal, non-reducing (1-&gt;4)-linked alpha-D-glucose residues with release of alpha-D-glucose.. In terms of biological role, essential for the degradation of glycogen in lysosomes. Has highest activity on alpha-1,4-linked glycosidic linkages, but can also hydrolyze alpha-1,6-linked glucans. The sequence is that of Lysosomal alpha-glucosidase (GAA) from Bos taurus (Bovine).